Here is a 556-residue protein sequence, read N- to C-terminus: 2,3-bisphosphoglycerate-independent phosphoglycerate mutase (556 aa).

Residues aspartate 25 and serine 78 each coordinate Mn(2+). The active-site Phosphoserine intermediate is the serine 78. Substrate contacts are provided by residues histidine 137, 167 to 168, arginine 203, arginine 210, 283 to 286, and lysine 358; these read RD and RADR. Mn(2+) is bound by residues aspartate 427, histidine 431, aspartate 468, histidine 469, and histidine 498.

It belongs to the BPG-independent phosphoglycerate mutase family. In terms of assembly, monomer. The cofactor is Mn(2+). As to expression, found ubiquitously in germinating seed.

It localises to the cytoplasm. The enzyme catalyses (2R)-2-phosphoglycerate = (2R)-3-phosphoglycerate. The protein operates within carbohydrate degradation; glycolysis; pyruvate from D-glyceraldehyde 3-phosphate: step 3/5. Its function is as follows. Catalyzes the interconversion of 2-phosphoglycerate and 3-phosphoglycerate. The chain is 2,3-bisphosphoglycerate-independent phosphoglycerate mutase from Ricinus communis (Castor bean).